We begin with the raw amino-acid sequence, 513 residues long: uncharacterized protein (513 aa).

The 59-residue stretch at 3–61 (NLKIGQKLQLEIERMGINGEGIGVISGRLVFIPYALPGEEVLVEITENARNFSRAKLVK) folds into the TRAM domain. S-adenosyl-L-methionine-binding residues include Gln-309, Tyr-338, Asp-359, and Asp-407. Cys-434 serves as the catalytic Nucleophile.

Belongs to the class I-like SAM-binding methyltransferase superfamily. RNA M5U methyltransferase family.

This is an uncharacterized protein from Lactococcus lactis subsp. lactis (strain IL1403) (Streptococcus lactis).